The chain runs to 461 residues: Transcription factor SOX-10 (461 aa).

Disordered regions lie at residues 1 to 60, 154 to 191, 205 to 268, 350 to 369, and 433 to 461; these read MADD…ADDD, LRMQHKKDHPDYKYQPRRRKNGKATQGEGEGQVEGEAG, LDHR…DFGN, KAQVKTEGSAPGGHYTDQPS, and AISDPAPSVPQSHSPTHWEQPVYTTLSRP. Residues 30-42 are compositionally biased toward polar residues; it reads ASDNSSHLASSGN. Positions 56–96 are dimerization (DIM); sequence EADDDKFPVCIREAVSQVLSGYDWTLVPMPVRVNGSNKSKP. The segment at residues 98 to 166 is a DNA-binding region (HMG box); the sequence is VKRPMNAFMV…QHKKDHPDYK (69 aa). The span at 154–167 shows a compositional bias: basic and acidic residues; it reads LRMQHKKDHPDYKY. Residues 181-191 show a composition bias toward gly residues; the sequence is EGEGQVEGEAG. Positions 221–306 are transactivation domain (TAM); the sequence is PEHSSGQSHG…NGHAGHPGHV (86 aa). Residues 247-264 are compositionally biased toward basic and acidic residues; it reads ADSKREGRSLGEGGKPHI. A transactivation domain (TAC) region spans residues 350-461; it reads KAQVKTEGSA…QPVYTTLSRP (112 aa). A compositionally biased stretch (polar residues) spans 441–461; it reads VPQSHSPTHWEQPVYTTLSRP.

The protein localises to the cytoplasm. It localises to the nucleus. Functionally, transcription factor that plays a central role in developing and mature glia. Specifically activates expression of myelin genes, during oligodendrocyte (OL) maturation, thereby playing a central role in oligodendrocyte maturation and CNS myelination. This is Transcription factor SOX-10 (SOX10) from Gallus gallus (Chicken).